We begin with the raw amino-acid sequence, 419 residues long: MLLTIGAQDLVNHLRAQFSAQPPRRLGVAVSGGGDSVALMHLLARCFPRGEVKLCVATVDHGLRSESASEAALVARQAAGLGLPHETLLWTGWTGEGNLQDQARRARYGLLTDWALRNRVTTVALAHTADDQAETLLMRLGRSAGVSGLAAMAPRRMQDGVVLVRPLLGITRDALRDFLRAEGIAWAEDPSNEDIRYDRIKARQALAGLAPMGIDAQRLAEVAANMARAREALDWYTFLAARDLTRIDGGDVLLEPRGFRTLPDEIARRLLLHIVGWIGGGEYPPRRVAVAEALSALRHERSSQLGGCLILGQGRRIRFCREWKAVETLTVPQGALWDGRWVLRGPVVKDGELRALGAAGLKLCPDWRQTGRPYAALIASPSVWSGADLVAAPLAGLANGWTAELESGEEDFYASLLSH.

An ATP-binding site is contributed by 31–36; that stretch reads SGGGDS.

It belongs to the tRNA(Ile)-lysidine synthase family.

It localises to the cytoplasm. It carries out the reaction cytidine(34) in tRNA(Ile2) + L-lysine + ATP = lysidine(34) in tRNA(Ile2) + AMP + diphosphate + H(+). In terms of biological role, ligates lysine onto the cytidine present at position 34 of the AUA codon-specific tRNA(Ile) that contains the anticodon CAU, in an ATP-dependent manner. Cytidine is converted to lysidine, thus changing the amino acid specificity of the tRNA from methionine to isoleucine. The sequence is that of tRNA(Ile)-lysidine synthase from Ruegeria pomeroyi (strain ATCC 700808 / DSM 15171 / DSS-3) (Silicibacter pomeroyi).